A 297-amino-acid polypeptide reads, in one-letter code: Tyrosine recombinase XerD (297 aa).

Positions 1-87 (MLEYAIEDFF…SIRSFHQFLI (87 aa)) constitute a Core-binding (CB) domain. One can recognise a Tyr recombinase domain in the interval 108-291 (KLPDILSQDE…TKARLKDMYQ (184 aa)). Residues Arg147, Lys171, His243, Arg246, and His269 contribute to the active site. Tyr278 (O-(3'-phospho-DNA)-tyrosine intermediate) is an active-site residue.

Belongs to the 'phage' integrase family. XerD subfamily. As to quaternary structure, forms a cyclic heterotetrameric complex composed of two molecules of XerC and two molecules of XerD.

It is found in the cytoplasm. Its function is as follows. Site-specific tyrosine recombinase, which acts by catalyzing the cutting and rejoining of the recombining DNA molecules. The XerC-XerD complex is essential to convert dimers of the bacterial chromosome into monomers to permit their segregation at cell division. It also contributes to the segregational stability of plasmids. This Oceanobacillus iheyensis (strain DSM 14371 / CIP 107618 / JCM 11309 / KCTC 3954 / HTE831) protein is Tyrosine recombinase XerD.